A 353-amino-acid polypeptide reads, in one-letter code: Photosystem II protein D1 (353 aa).

An N-acetylthreonine modification is found at Thr-2. Thr-2 carries the post-translational modification Phosphothreonine. Helical transmembrane passes span 29–46 (YIGW…TATS), 118–133 (HFLL…EWEL), and 142–156 (WIAV…AATA). Position 118 (His-118) interacts with chlorophyll a. Tyr-126 serves as a coordination point for pheophytin a. Residues Asp-170 and Glu-189 each contribute to the [CaMn4O5] cluster site. The chain crosses the membrane as a helical span at residues 197–218 (FHMLGVAGVFGGSLFSAMHGSL). Chlorophyll a is bound at residue His-198. A quinone-binding positions include His-215 and 264–265 (SF). His-215 provides a ligand contact to Fe cation. Fe cation is bound at residue His-272. Residues 274–288 (FLAAWPVVGIWFTAL) form a helical membrane-spanning segment. [CaMn4O5] cluster is bound by residues His-332, Glu-333, Asp-342, and Ala-344. The propeptide occupies 345-353 (AIEAPSTNG).

The protein belongs to the reaction center PufL/M/PsbA/D family. In terms of assembly, PSII is composed of 1 copy each of membrane proteins PsbA, PsbB, PsbC, PsbD, PsbE, PsbF, PsbH, PsbI, PsbJ, PsbK, PsbL, PsbM, PsbT, PsbX, PsbY, PsbZ, Psb30/Ycf12, at least 3 peripheral proteins of the oxygen-evolving complex and a large number of cofactors. It forms dimeric complexes. The D1/D2 heterodimer binds P680, chlorophylls that are the primary electron donor of PSII, and subsequent electron acceptors. It shares a non-heme iron and each subunit binds pheophytin, quinone, additional chlorophylls, carotenoids and lipids. D1 provides most of the ligands for the Mn4-Ca-O5 cluster of the oxygen-evolving complex (OEC). There is also a Cl(-1) ion associated with D1 and D2, which is required for oxygen evolution. The PSII complex binds additional chlorophylls, carotenoids and specific lipids. is required as a cofactor. Post-translationally, tyr-161 forms a radical intermediate that is referred to as redox-active TyrZ, YZ or Y-Z. C-terminally processed by CTPA; processing is essential to allow assembly of the oxygen-evolving complex and thus photosynthetic growth.

It localises to the plastid. The protein localises to the chloroplast thylakoid membrane. It carries out the reaction 2 a plastoquinone + 4 hnu + 2 H2O = 2 a plastoquinol + O2. Its function is as follows. Photosystem II (PSII) is a light-driven water:plastoquinone oxidoreductase that uses light energy to abstract electrons from H(2)O, generating O(2) and a proton gradient subsequently used for ATP formation. It consists of a core antenna complex that captures photons, and an electron transfer chain that converts photonic excitation into a charge separation. The D1/D2 (PsbA/PsbD) reaction center heterodimer binds P680, the primary electron donor of PSII as well as several subsequent electron acceptors. In Citrus sinensis (Sweet orange), this protein is Photosystem II protein D1.